Reading from the N-terminus, the 231-residue chain is Isoprenyl transferase (231 aa).

Residue Asp-14 is part of the active site. Asp-14 contacts Mg(2+). Residues 15–18 (GNGR), Trp-19, Arg-27, His-31, and 59–61 (STE) each bind substrate. Asn-62 functions as the Proton acceptor in the catalytic mechanism. Substrate-binding positions include Trp-63, Arg-65, Arg-176, and 182–184 (RIS). A Mg(2+)-binding site is contributed by Glu-195.

This sequence belongs to the UPP synthase family. In terms of assembly, homodimer. Requires Mg(2+) as cofactor.

Catalyzes the condensation of isopentenyl diphosphate (IPP) with allylic pyrophosphates generating different type of terpenoids. In Aquifex pyrophilus, this protein is Isoprenyl transferase.